The sequence spans 148 residues: Large-conductance mechanosensitive channel (148 aa).

Helical transmembrane passes span I21–V41, I45–V65, and G92–V112.

Belongs to the MscL family. Homopentamer.

The protein resides in the cell inner membrane. In terms of biological role, channel that opens in response to stretch forces in the membrane lipid bilayer. May participate in the regulation of osmotic pressure changes within the cell. The polypeptide is Large-conductance mechanosensitive channel (Bordetella petrii (strain ATCC BAA-461 / DSM 12804 / CCUG 43448)).